Consider the following 430-residue polypeptide: C4-dicarboxylate transport protein (430 aa).

The next 9 membrane-spanning stretches (helical) occupy residues 8 to 28 (SLYFQVLAAITIGILLGHFYP), 44 to 64 (LIKMIIAPVIFCTVVTGIAGM), 76 to 96 (AALLYFEVVSTIALIIGLVVV), 144 to 164 (AFASGNILQVLLFAVMFGFAL), 184 to 204 (VIFGVINMIMKLAPLGAFGAM), 222 to 242 (LILCFYLTCILFVFLVLGSIA), 289 to 309 (VVGLVIPTGYSFNLDGTSIYL), 326 to 346 (IWHQITLLVVLLLSSKGAAGV), and 352 to 372 (IVLAATLSAVGHLPVAGLALI).

This sequence belongs to the dicarboxylate/amino acid:cation symporter (DAACS) (TC 2.A.23) family.

It localises to the cell inner membrane. Responsible for the transport of dicarboxylates such as succinate, fumarate, and malate from the periplasm across the membrane. This chain is C4-dicarboxylate transport protein, found in Pectobacterium atrosepticum (strain SCRI 1043 / ATCC BAA-672) (Erwinia carotovora subsp. atroseptica).